Consider the following 532-residue polypeptide: Autophagy-related protein 21 (532 aa).

WD repeat units follow at residues 265–310 and 321–360; these read AHDS…KPFN and HNIA…HESF. Positions 317-321 match the L/FRRG motif motif; that stretch reads LRRGH. The tract at residues 360–380 is disordered; it reads FEYEEDPANESDPDDEDRSSE. A compositionally biased stretch (acidic residues) spans 361 to 378; sequence EYEEDPANESDPDDEDRS.

It belongs to the WD repeat PROPPIN family.

It is found in the cytoplasm. Its subcellular location is the membrane. It localises to the vacuole membrane. Functionally, required for cytoplasm to vacuole transport (Cvt) vesicles formation and mitophagy. Involved in binding of phosphatidylethanolamine to ATG8 and in recruitment of ATG8 and ATG5 to the pre-autophagosomal structure. Protects ATG8 from ARG4-mediated cleavage. This is Autophagy-related protein 21 (ATG21) from Debaryomyces hansenii (strain ATCC 36239 / CBS 767 / BCRC 21394 / JCM 1990 / NBRC 0083 / IGC 2968) (Yeast).